The chain runs to 225 residues: Membrane protein (225 aa).

Topologically, residues 1–20 (MSNETNCTLDFEQSVELFKE) are virion surface. Residues 21–41 (YNLFITAFLLFLTIILQYGYA) form a helical membrane-spanning segment. The Intravirion segment spans residues 42-51 (TRIRFIYILK). Residues 52–72 (MIVLWCFWPLNIAVGVISCIY) form a helical membrane-spanning segment. Over 73-77 (PPNTG) the chain is Virion surface. The chain crosses the membrane as a helical span at residues 78 to 98 (GLVAAIILTVFACLSFVGYWI). Topologically, residues 99–225 (QSCRLFKRCR…VATGGSSLYT (127 aa)) are intravirion.

Belongs to the gammacoronaviruses M protein family. In terms of assembly, homomultimer. Interacts with envelope E protein in the budding compartment of the host cell, which is located between endoplasmic reticulum and the Golgi complex. Forms a complex with HE and S proteins. Interacts with nucleocapsid N protein. This interaction probably participates in RNA packaging into the virus.

It is found in the virion membrane. The protein localises to the host Golgi apparatus membrane. Its function is as follows. Component of the viral envelope that plays a central role in virus morphogenesis and assembly via its interactions with other viral proteins. The protein is Membrane protein of Avian infectious bronchitis virus (strain KB8523) (IBV).